The chain runs to 148 residues: Endoribonuclease YbeY (148 aa).

Zn(2+)-binding residues include His113, His117, and His123.

This sequence belongs to the endoribonuclease YbeY family. The cofactor is Zn(2+).

The protein localises to the cytoplasm. Functionally, single strand-specific metallo-endoribonuclease involved in late-stage 70S ribosome quality control and in maturation of the 3' terminus of the 16S rRNA. The protein is Endoribonuclease YbeY of Borrelia recurrentis (strain A1).